Consider the following 210-residue polypeptide: Cilia- and flagella-associated protein 418 (210 aa).

The required for interaction with FAM161A stretch occupies residues 1–77 (MAKDLDELLD…LINEIFEEPN (77 aa)). Positions 24–59 (LDLGERPKGGSGGGGTHSGDRNGAQEKDTLRSTETF) are disordered. Over residues 41-59 (SGDRNGAQEKDTLRSTETF) the composition is skewed to basic and acidic residues.

As to quaternary structure, interacts (via N-terminus) with FAM161A (via central region); the interaction is direct.

The protein resides in the cytoplasm. Its subcellular location is the photoreceptor inner segment. Its function is as follows. May be involved in photoreceptor outer segment disk morphogenesis. This chain is Cilia- and flagella-associated protein 418, found in Rattus norvegicus (Rat).